The sequence spans 547 residues: Fumarate reductase (CoM/CoB) subunit A (547 aa).

It belongs to the FAD-dependent oxidoreductase 2 family. Subunit A of the heterodimeric fumarate reductase of methanogenic Archaea, composed of subunits A (TfrA) and B (TfrB). An oxidized flavin serves as cofactor.

The protein localises to the cytoplasm. It carries out the reaction coenzyme B + coenzyme M + fumarate = coenzyme M-coenzyme B heterodisulfide + succinate. In terms of biological role, catalyzes the reduction of fumarate with reduced coenzyme M (CoM-S-H) and coenzyme B (CoB-S-H). In vitro, is able to reduces fumarate with reduced benzyl viologen, oxidize CoM-S-H and CoB-S-H to CoM-S-S-CoB with methylene blue, and reduce CoM-S-S-CoB with reduced benzyl viologen. The enzyme has specificity for the two thiol compounds as the CoB--CoM heterodisulfide reductase. The enzyme is very sensitive to oxygen. The chain is Fumarate reductase (CoM/CoB) subunit A from Methanothermobacter marburgensis (strain ATCC BAA-927 / DSM 2133 / JCM 14651 / NBRC 100331 / OCM 82 / Marburg) (Methanobacterium thermoautotrophicum).